The primary structure comprises 419 residues: Gamma-glutamyl phosphate reductase (419 aa).

This sequence belongs to the gamma-glutamyl phosphate reductase family.

The protein localises to the cytoplasm. The catalysed reaction is L-glutamate 5-semialdehyde + phosphate + NADP(+) = L-glutamyl 5-phosphate + NADPH + H(+). It functions in the pathway amino-acid biosynthesis; L-proline biosynthesis; L-glutamate 5-semialdehyde from L-glutamate: step 2/2. Catalyzes the NADPH-dependent reduction of L-glutamate 5-phosphate into L-glutamate 5-semialdehyde and phosphate. The product spontaneously undergoes cyclization to form 1-pyrroline-5-carboxylate. The chain is Gamma-glutamyl phosphate reductase from Caulobacter sp. (strain K31).